Consider the following 281-residue polypeptide: MGAITLDGKATRDEIFVDLKQRVAALTAAGRTPGLGTILVGDDPGSQAYVRGKHADCAKVGITSIRRDLPADISTAALNDTIDELNANPECTGYIVQLPLPKQLDENAALERVDPDKDADGLHPTNLGRLVLNNPAPLPCTPRGIVHLLRRYDAEIAGAHVVVIGRGVTVGRPLGLLLTRRSENATVTLCHTGTRDLPALTRQADIIVAAVGVPHLLTADMVRPGAAVLDVGVSRVDGKLAGDVHPDVWEVAGHVSPNPGGVGPLTRAFLLTNVVELAERE.

NADP(+) is bound by residues 165–167 (GRG), Thr-192, and Val-233.

It belongs to the tetrahydrofolate dehydrogenase/cyclohydrolase family. As to quaternary structure, homodimer.

The catalysed reaction is (6R)-5,10-methylene-5,6,7,8-tetrahydrofolate + NADP(+) = (6R)-5,10-methenyltetrahydrofolate + NADPH. The enzyme catalyses (6R)-5,10-methenyltetrahydrofolate + H2O = (6R)-10-formyltetrahydrofolate + H(+). It participates in one-carbon metabolism; tetrahydrofolate interconversion. Catalyzes the oxidation of 5,10-methylenetetrahydrofolate to 5,10-methenyltetrahydrofolate and then the hydrolysis of 5,10-methenyltetrahydrofolate to 10-formyltetrahydrofolate. The polypeptide is Bifunctional protein FolD (Mycolicibacterium paratuberculosis (strain ATCC BAA-968 / K-10) (Mycobacterium paratuberculosis)).